Consider the following 234-residue polypeptide: Large ribosomal subunit protein uL1 (234 aa).

This sequence belongs to the universal ribosomal protein uL1 family. As to quaternary structure, part of the 50S ribosomal subunit.

Binds directly to 23S rRNA. The L1 stalk is quite mobile in the ribosome, and is involved in E site tRNA release. In terms of biological role, protein L1 is also a translational repressor protein, it controls the translation of the L11 operon by binding to its mRNA. This chain is Large ribosomal subunit protein uL1, found in Desulfosudis oleivorans (strain DSM 6200 / JCM 39069 / Hxd3) (Desulfococcus oleovorans).